A 498-amino-acid chain; its full sequence is ATP synthase subunit alpha 1 (498 aa).

It belongs to the ATPase alpha/beta chains family. In terms of assembly, F-type ATPases have 2 components, CF(1) - the catalytic core - and CF(0) - the membrane proton channel. CF(1) has five subunits: alpha(3), beta(3), gamma(1), delta(1), epsilon(1). CF(0) has three main subunits: a(1), b(2) and c(9-12). The alpha and beta chains form an alternating ring which encloses part of the gamma chain. CF(1) is attached to CF(0) by a central stalk formed by the gamma and epsilon chains, while a peripheral stalk is formed by the delta and b chains.

It is found in the cell membrane. The enzyme catalyses ATP + H2O + 4 H(+)(in) = ADP + phosphate + 5 H(+)(out). In terms of biological role, produces ATP from ADP in the presence of a proton gradient across the membrane. The alpha chain is a regulatory subunit. This is ATP synthase subunit alpha 1 from Listeria monocytogenes serotype 4b (strain F2365).